The following is a 169-amino-acid chain: Small ribosomal subunit protein bS18c (169 aa).

The interval 1-61 is disordered; that stretch reads MYTSKQPFLK…RRPRIGPGDR (61 aa). Over residues 27–55 the composition is skewed to basic residues; it reads QTFRKSKQTFRKFKQPFRKSKQPFRRRPR.

This sequence belongs to the bacterial ribosomal protein bS18 family. Part of the 30S ribosomal subunit.

The protein resides in the plastid. It localises to the chloroplast. This Agrostis stolonifera (Creeping bentgrass) protein is Small ribosomal subunit protein bS18c.